Reading from the N-terminus, the 408-residue chain is Arginine deiminase (408 aa).

The Amidino-cysteine intermediate role is filled by C397.

It belongs to the arginine deiminase family.

It localises to the cytoplasm. It carries out the reaction L-arginine + H2O = L-citrulline + NH4(+). It participates in amino-acid degradation; L-arginine degradation via ADI pathway; carbamoyl phosphate from L-arginine: step 1/2. The chain is Arginine deiminase from Listeria innocua serovar 6a (strain ATCC BAA-680 / CLIP 11262).